We begin with the raw amino-acid sequence, 571 residues long: DExH-box ATP-dependent RNA helicase DExH16, mitochondrial (571 aa).

The transit peptide at 1-56 (MAYSVVRLRKVSALGISRVLQADKGSLWRFHFEPEFGDLLRLGVLTRNYRKNSGSP) directs the protein to the mitochondrion. A Helicase ATP-binding domain is found at 83–212 (IARKKKRKVI…HLCGDPAVVP (130 aa)). 96–103 (GPTNSGKT) contributes to the ATP binding site. The DEIH box; degenerate signature appears at 176–179 (DEIQ). The Helicase C-terminal domain maps to 213-399 (LVEDILKVTG…GLFPTFDLLS (187 aa)).

This sequence belongs to the DExH box helicase family. In terms of assembly, homodimer; in free form. Component of the mitochondrial degradosome (mtEXO) complex which is a heteropentamer containing 2 copies of SUPV3L1 and 3 copies of PNPT1. Mg(2+) serves as cofactor. Requires Mn(2+) as cofactor. In terms of tissue distribution, weakly expressed.

It localises to the nucleus. It is found in the mitochondrion matrix. The protein resides in the mitochondrion nucleoid. It carries out the reaction ATP + H2O = ADP + phosphate + H(+). Its activity is regulated as follows. Activated by the presence of mitochondrial RNA. Functionally, major helicase player in mitochondrial RNA metabolism. Component of the mitochondrial degradosome (mtEXO) complex, that degrades 3' overhang double-stranded RNA with a 3'-to-5' directionality in an ATP-dependent manner. ATPase and ATP-dependent multisubstrate helicase, able to unwind double-stranded (ds) DNA and RNA, and RNA/DNA heteroduplexes in the 5'-to-3' direction. Plays a role in the RNA surveillance system in mitochondria; regulates the stability of mature mRNAs, the removal of aberrantly formed mRNAs and the rapid degradation of non coding processing intermediates. Required during pollen development. The polypeptide is DExH-box ATP-dependent RNA helicase DExH16, mitochondrial (Arabidopsis thaliana (Mouse-ear cress)).